A 600-amino-acid chain; its full sequence is UvrABC system protein C (600 aa).

One can recognise a GIY-YIG domain in the interval Glu-16 to Val-94. The 36-residue stretch at His-208–Tyr-243 folds into the UVR domain.

The protein belongs to the UvrC family. Interacts with UvrB in an incision complex.

The protein resides in the cytoplasm. Its function is as follows. The UvrABC repair system catalyzes the recognition and processing of DNA lesions. UvrC both incises the 5' and 3' sides of the lesion. The N-terminal half is responsible for the 3' incision and the C-terminal half is responsible for the 5' incision. In Porphyromonas gingivalis (strain ATCC 33277 / DSM 20709 / CIP 103683 / JCM 12257 / NCTC 11834 / 2561), this protein is UvrABC system protein C.